A 630-amino-acid polypeptide reads, in one-letter code: METTPLNSQKQLSACKDGEDCQENGVLQKVVPTPGDKVESGQISNGYSAVPSPGAGDDTRHSIPAATTTLVAELHQGERETWGKKVDFLLSVIGYAVDLGNVWRFPYICYQNGGGAFLIPYTIMAIFGGIPLFYMELALGQYHRNGCISIWRKICPIFKGIGYAICIIAFYIASYYNTIMAWALYYLISSFTDQLPWTSCKNSWNTGNCTNYFSEDNITWTLHSTSPAEEFYTRHVLQIHRSKGLQDLGGISWQLALCIMLIFTVIYFSIWKGVKTSGKVVWVTATFPYIILSVLLVRGATLPGAWRGVLFYLKPNWQKLLETGVWIDAAAQIFFSLGPGFGVLLAFASYNKFNNNCYQDALVTSVVNCMTSFVSGFVIFTVLGYMAEMRNEDVSEVAKDAGPSLLFITYAEAIANMPASTFFAIIFFLMLITLGLDSTFAGLEGVITAVLDEFPHIWAKRREWFVLAVVITCFFGSLVTLTFGGAYVVKLLEEYATGPAVLTVALIEAVAVSWFYGITQFCRDVKEMLGFSPGWFWRICWVAISPLFLLFIICSFLMSPPQLRLFQYNYPHWSIILGYCIGTSSFVCIPTYIAYRLISTPGTFKERIIKSITPETPTEIPCGDVRLNAV.

The Cytoplasmic portion of the chain corresponds to M1–D87. A disordered region spans residues V31 to T59. Y47 carries the post-translational modification Phosphotyrosine. A helical membrane pass occupies residues F88–N112. The Na(+) site is built by G94, A96, V97, D98, and N101. D98 is a binding site for serotonin. The Extracellular portion of the chain corresponds to G113–G115. A helical transmembrane segment spans residues A116 to M135. The Cytoplasmic segment spans residues E136 to G160. Position 142 is a phosphotyrosine (Y142). The chain crosses the membrane as a helical span at residues I161 to Y186. The Extracellular portion of the chain corresponds to L187–S252. C200 and C209 form a disulfide bridge. 2 N-linked (GlcNAc...) asparagine glycosylation sites follow: N208 and N217. The chain crosses the membrane as a helical span at residues W253 to W271. Over K272 to S277 the chain is Cytoplasmic. A Phosphothreonine modification is found at T276. The chain crosses the membrane as a helical span at residues G278–V297. Residues R298 to G324 lie on the Extracellular side of the membrane. Residues V325–F347 form a helical membrane-spanning segment. S336 contributes to the Na(+) binding site. Over A348 to D360 the chain is Cytoplasmic. The chain crosses the membrane as a helical span at residues A361–F380. Residue N368 coordinates Na(+). Residues T381–T421 are Extracellular-facing. A helical transmembrane segment spans residues F422–L443. Positions 434, 437, and 438 each coordinate Na(+). T439 is a serotonin binding site. The Cytoplasmic portion of the chain corresponds to E444 to E463. The chain crosses the membrane as a helical span at residues W464–F483. The Extracellular portion of the chain corresponds to G484–E494. E494 and Y495 together coordinate serotonin. A helical transmembrane segment spans residues Y495 to Y516. Over G517–R538 the chain is Cytoplasmic. The helical transmembrane segment at I539 to M558 threads the bilayer. Positions 556 and 559 each coordinate serotonin. Over S559–S574 the chain is Extracellular. Residues I575–Y595 form a helical membrane-spanning segment. Over R596–V630 the chain is Cytoplasmic. The tract at residues T616 to D624 is interaction with RAB4A.

Belongs to the sodium:neurotransmitter symporter (SNF) (TC 2.A.22) family. SLC6A4 subfamily. Monomer or homooligomer. Interacts (via C-terminus) with SCAMP2; the interaction is direct and retains transporter molecules intracellularly. Interacts with filamentous actin and STX1A. Interacts (via the N-terminus) with STX1A (via the H3 domain); this interaction regulates SLC4A6 channel conductance. Interacts with SEC23A, SEC24C and PATJ. Interacts with NOS1; the interaction may diminish the cell surface localization of SERT in the brain and, correspondingly, reduce serotonin reuptake. Interacts with TGFB1I1. Interacts with ITGAV:ITGB3. Interacts (via C-terminus) with ITGB3; this interaction regulates SLC6A4 trafficking. In terms of processing, phosphorylation at Thr-276 increases 5-HT uptake and is required for cGMP-mediated SERT regulation.

The protein resides in the cell membrane. Its subcellular location is the endomembrane system. The protein localises to the endosome membrane. It localises to the synapse. It is found in the cell junction. The protein resides in the focal adhesion. Its subcellular location is the cell projection. The protein localises to the neuron projection. The enzyme catalyses serotonin(out) + K(+)(in) + Na(+)(out) + H(+)(in) = serotonin(in) + K(+)(out) + Na(+)(in) + H(+)(out). Its function is as follows. Serotonin transporter that cotransports serotonin with one Na(+) ion in exchange for one K(+) ion and possibly one proton in an overall electroneutral transport cycle. Transports serotonin across the plasma membrane from the extracellular compartment to the cytosol thus limiting serotonin intercellular signaling. Essential for serotonin homeostasis in the central nervous system. In the developing somatosensory cortex, acts in glutamatergic neurons to control serotonin uptake and its trophic functions accounting for proper spatial organization of cortical neurons and elaboration of sensory circuits. In the mature cortex, acts primarily in brainstem raphe neurons to mediate serotonin uptake from the synaptic cleft back into the pre-synaptic terminal thus terminating serotonin signaling at the synapse. Modulates mucosal serotonin levels in the gastrointestinal tract through uptake and clearance of serotonin in enterocytes. Required for enteric neurogenesis and gastrointestinal reflexes. Regulates blood serotonin levels by ensuring rapid high affinity uptake of serotonin from plasma to platelets, where it is further stored in dense granules via vesicular monoamine transporters and then released upon stimulation. Mechanistically, the transport cycle starts with an outward-open conformation having Na1(+) and Cl(-) sites occupied. The binding of a second extracellular Na2(+) ion and serotonin substrate leads to structural changes to outward-occluded to inward-occluded to inward-open, where the Na2(+) ion and serotonin are released into the cytosol. Binding of intracellular K(+) ion induces conformational transitions to inward-occluded to outward-open and completes the cycle by releasing K(+) possibly together with a proton bound to Asp-98 into the extracellular compartment. Na1(+) and Cl(-) ions remain bound throughout the transport cycle. Additionally, displays serotonin-induced channel-like conductance for monovalent cations, mainly Na(+) ions. The channel activity is uncoupled from the transport cycle and may contribute to the membrane resting potential or excitability. The chain is Sodium-dependent serotonin transporter (SLC6A4) from Macaca mulatta (Rhesus macaque).